We begin with the raw amino-acid sequence, 511 residues long: Peroxisomal N(1)-acetyl-spermine/spermidine oxidase (511 aa).

Met1 is modified (N-acetylmethionine). Residues Ala24, Glu45, Arg53, and His69–Trp70 each bind FAD. Substrate-binding residues include His72 and Val194. Val247 serves as a coordination point for FAD. Asn320 lines the substrate pocket. FAD is bound by residues Glu472 and Thr481–Thr482. Residues Pro509 to Leu511 carry the Microbody targeting signal motif.

The protein belongs to the flavin monoamine oxidase family. In terms of assembly, monomer. FAD serves as cofactor. As to expression, widely expressed. Not detected in spleen. Expressed at lower level in neoplastic tissues.

Its subcellular location is the peroxisome. It is found in the cytoplasm. The catalysed reaction is N(1)-acetylspermine + O2 + H2O = 3-acetamidopropanal + spermidine + H2O2. It carries out the reaction N(1)-acetylspermidine + O2 + H2O = 3-acetamidopropanal + putrescine + H2O2. It catalyses the reaction N(1),N(12)-diacetylspermine + O2 + H2O = 3-acetamidopropanal + N(1)-acetylspermidine + H2O2. The protein operates within amine and polyamine metabolism; spermine metabolism. Functionally, flavoenzyme which catalyzes the oxidation of N(1)-acetylspermine to spermidine and is thus involved in the polyamine back-conversion. Can also oxidize N(1)-acetylspermidine to putrescine. Substrate specificity: N(1)-acetylspermine = N(1)-acetylspermidine &gt; N(1),N(12)-diacylspermine &gt;&gt; spermine. Does not oxidize spermidine. Plays an important role in the regulation of polyamine intracellular concentration and has the potential to act as a determinant of cellular sensitivity to the antitumor polyamine analogs. This Homo sapiens (Human) protein is Peroxisomal N(1)-acetyl-spermine/spermidine oxidase (PAOX).